We begin with the raw amino-acid sequence, 292 residues long: DSC E3 ubiquitin ligase complex subunit 3 (292 aa).

Residues 1-243 (MSAEPLLPTH…PIANIKHNKD (243 aa)) lie on the Extracellular side of the membrane. N11, N41, N77, N99, and N145 each carry an N-linked (GlcNAc...) asparagine glycan. The chain crosses the membrane as a helical span at residues 244 to 264 (LLLGICVGFFFGVFGILLMKF). The Cytoplasmic portion of the chain corresponds to 265 to 273 (DGLFNRRQK). The chain crosses the membrane as a helical span at residues 274-291 (MAIFAGVIVNVMFCLVRG). A topological domain (extracellular) is located at residue F292.

Belongs to the dsc3 family. In terms of assembly, component of the DSC E3 ligase complexes composed of at least TUL1, DSC2, DSC3, UBX3, CDC48 as well as VLD1 for the vacuole-localized complex or GLD1 for the Golgi/endosome-localized complex.

It localises to the endoplasmic reticulum membrane. Component of the DSC E3 ubiquitin ligase complexes that tag proteins present in Golgi, endosome and vacuole membranes and function in protein homeostasis under non-stress conditions and support a role in protein quality control. Involved in endocytic protein trafficking. In Saccharomyces cerevisiae (strain ATCC 204508 / S288c) (Baker's yeast), this protein is DSC E3 ubiquitin ligase complex subunit 3.